The chain runs to 233 residues: Large ribosomal subunit protein uL1 (233 aa).

The protein belongs to the universal ribosomal protein uL1 family. As to quaternary structure, part of the 50S ribosomal subunit.

In terms of biological role, binds directly to 23S rRNA. The L1 stalk is quite mobile in the ribosome, and is involved in E site tRNA release. Functionally, protein L1 is also a translational repressor protein, it controls the translation of the L11 operon by binding to its mRNA. The polypeptide is Large ribosomal subunit protein uL1 (Brucella anthropi (strain ATCC 49188 / DSM 6882 / CCUG 24695 / JCM 21032 / LMG 3331 / NBRC 15819 / NCTC 12168 / Alc 37) (Ochrobactrum anthropi)).